The following is a 263-amino-acid chain: Probable septum site-determining protein MinC (263 aa).

Residues 107-159 (LPPSGARERPLDIKDSAPRKPAEEPSPSAGEARPEPAKAEEKPAEPVSRPTKV) form a disordered region. Composition is skewed to basic and acidic residues over residues 112–129 (ARER…KPAE) and 138–150 (ARPE…EKPA).

Belongs to the MinC family. As to quaternary structure, interacts with MinD and FtsZ.

Its function is as follows. Cell division inhibitor that blocks the formation of polar Z ring septums. Rapidly oscillates between the poles of the cell to destabilize FtsZ filaments that have formed before they mature into polar Z rings. Prevents FtsZ polymerization. The sequence is that of Probable septum site-determining protein MinC from Pseudomonas aeruginosa (strain LESB58).